Consider the following 595-residue polypeptide: Cardiolipin synthase (CMP-forming) / mitochondrial hydrolase fusion protein (595 aa).

The transit peptide at 1 to 24 directs the protein to the mitochondrion; the sequence is MLHTINYRSWHLAARQLGRSTFRK. Transmembrane regions (helical) follow at residues 538–560 and 564–586; these read ALQLLLLGLLITEPILPFDASFA and LFYIVGCTTIASGASYCISRNTF.

In the N-terminal section; belongs to the HAD-like hydrolase superfamily. It in the C-terminal section; belongs to the CDP-alcohol phosphatidyltransferase class-I family. Mg(2+) is required as a cofactor. Post-translationally, proteolytically cleaved, presumably during its import into the mitochondrion by mitochondrial processing peptidase.

Its subcellular location is the mitochondrion. It is found in the mitochondrion inner membrane. It catalyses the reaction a CDP-1,2-diacyl-sn-glycerol + a 1,2-diacyl-sn-glycero-3-phospho-(1'-sn-glycerol) = a cardiolipin + CMP + H(+). Functionally, catalyzes the synthesis of cardiolipin (CL) (diphosphatidylglycerol) by specifically transferring a phosphatidyl group from CDP-diacylglycerol to phosphatidylglycerol (PG). CL is a key phospholipid in mitochondrial membranes and plays important roles in maintaining the functional integrity and dynamics of mitochondria under both optimal and stress conditions. Activity is dispensable for viability. This Schizosaccharomyces pombe (strain 972 / ATCC 24843) (Fission yeast) protein is Cardiolipin synthase (CMP-forming) / mitochondrial hydrolase fusion protein.